We begin with the raw amino-acid sequence, 259 residues long: Protein GrpE (259 aa).

Disordered regions lie at residues 1-74 (MNSD…IKGS) and 228-259 (PGPK…KDEN). A compositionally biased stretch (low complexity) spans 17 to 40 (SSQNNPSENSVSSPNSNESVNQVE). Polar residues-rich tracts occupy residues 56–73 (VDTA…NIKG) and 240–253 (QSAS…SVDG).

This sequence belongs to the GrpE family. In terms of assembly, homodimer.

It is found in the cytoplasm. In terms of biological role, participates actively in the response to hyperosmotic and heat shock by preventing the aggregation of stress-denatured proteins, in association with DnaK and GrpE. It is the nucleotide exchange factor for DnaK and may function as a thermosensor. Unfolded proteins bind initially to DnaJ; upon interaction with the DnaJ-bound protein, DnaK hydrolyzes its bound ATP, resulting in the formation of a stable complex. GrpE releases ADP from DnaK; ATP binding to DnaK triggers the release of the substrate protein, thus completing the reaction cycle. Several rounds of ATP-dependent interactions between DnaJ, DnaK and GrpE are required for fully efficient folding. The chain is Protein GrpE from Prochlorococcus marinus (strain NATL2A).